Reading from the N-terminus, the 107-residue chain is YcgL domain-containing protein Pcryo_0807 (107 aa).

The YcgL domain occupies 1–95 (MHCDIYKFLK…QDVMRRQAEL (95 aa)).

This Psychrobacter cryohalolentis (strain ATCC BAA-1226 / DSM 17306 / VKM B-2378 / K5) protein is YcgL domain-containing protein Pcryo_0807.